The chain runs to 473 residues: Peptidoglycan DL-endopeptidase CwlO (473 aa).

The first 30 residues, 1–30, serve as a signal peptide directing secretion; that stretch reads MRKSLITLGLASVIGTSSFLIPFTSKTASA. Disordered regions lie at residues 31 to 52, 79 to 98, and 237 to 337; these read ETLD…SSIE, ALDT…KTKE, and EASE…GTVI. The segment covering 33 to 44 has biased composition (basic and acidic residues); it reads LDEKKQKIESKQ. The span at 241 to 250 shows a compositional bias: polar residues; sequence LANQKANTEA. 2 stretches are compositionally biased toward basic and acidic residues: residues 251–260 and 267–277; these read EQARIKKEQE and KKQEEAQKASD. Residues 291–337 are compositionally biased toward low complexity; that stretch reads SSKASSSDDSSDNSSDNSSNGSSNSSSNGSSSKKSSGSNSNSGGTVI. Residues 340–471 form the NlpC/P60 domain; it reads SGGIEGAISV…AAFKGVVRRV (132 aa). The active-site Nucleophile is the Cys-377. The Proton acceptor role is filled by His-431. The active site involves Asn-443.

Belongs to the peptidase C40 family. Identified in the extracellular proteome as a number of processing products of about 50 and 30 kDa.

It is found in the secreted. The protein localises to the cell wall. With respect to regulation, detected in exponentially growing cells, the 50 and 30 kDa processing products disappear upon entry into stationary phase with the concomitant appearance of a 20 kDa products. The 50 kDa form persists in the absence of extracellular proteases. In terms of biological role, the C-terminal part of CwlO shows a cell wall hydrolytic DL-endopeptidase activity. This Bacillus subtilis (strain 168) protein is Peptidoglycan DL-endopeptidase CwlO (cwlO).